Reading from the N-terminus, the 165-residue chain is Large ribosomal subunit protein uL11A (165 aa).

Arginine 67 carries the post-translational modification N5-methylarginine.

Belongs to the universal ribosomal protein uL11 family. In terms of assembly, component of the large ribosomal subunit (LSU). Mature yeast ribosomes consist of a small (40S) and a large (60S) subunit. The 40S small subunit contains 1 molecule of ribosomal RNA (18S rRNA) and at least 33 different proteins. The large 60S subunit contains 3 rRNA molecules (25S, 5.8S and 5S rRNA) and at least 46 different proteins.

The protein resides in the cytoplasm. It is found in the nucleus. It localises to the nucleolus. In terms of biological role, this protein binds directly to 26S ribosomal RNA. Its function is as follows. Component of the ribosome, a large ribonucleoprotein complex responsible for the synthesis of proteins in the cell. The small ribosomal subunit (SSU) binds messenger RNAs (mRNAs) and translates the encoded message by selecting cognate aminoacyl-transfer RNA (tRNA) molecules. The large subunit (LSU) contains the ribosomal catalytic site termed the peptidyl transferase center (PTC), which catalyzes the formation of peptide bonds, thereby polymerizing the amino acids delivered by tRNAs into a polypeptide chain. The nascent polypeptides leave the ribosome through a tunnel in the LSU and interact with protein factors that function in enzymatic processing, targeting, and the membrane insertion of nascent chains at the exit of the ribosomal tunnel. This Schizosaccharomyces pombe (strain 972 / ATCC 24843) (Fission yeast) protein is Large ribosomal subunit protein uL11A (rpl1201).